The chain runs to 30 residues: Antifungal protein Lap (30 aa).

Its function is as follows. Displays antifungal activity against M.arachidicola and P.piricola, but not against R.solani, C.gossypii and C.comatus. Inhibits mycelial growth in P.piricola with an IC(50) of 70 nM. Displays very low cell-free translation inhibitory activity in a rabbit reticulocyte lysate system (IC(50)=70 uM) but is able to inhibit HIV-1 reverse transcriptase activity (IC(50)=5.2 nM). In Lyophyllum shimeji (Hon-shimeji), this protein is Antifungal protein Lap.